The following is a 228-amino-acid chain: UPF0173 metal-dependent hydrolase Tpen_1493 (228 aa).

It belongs to the UPF0173 family.

This is UPF0173 metal-dependent hydrolase Tpen_1493 from Thermofilum pendens (strain DSM 2475 / Hrk 5).